Here is a 116-residue protein sequence, read N- to C-terminus: Large ribosomal subunit protein bL19 (116 aa).

Belongs to the bacterial ribosomal protein bL19 family.

Functionally, this protein is located at the 30S-50S ribosomal subunit interface and may play a role in the structure and function of the aminoacyl-tRNA binding site. In Chloroflexus aurantiacus (strain ATCC 29366 / DSM 635 / J-10-fl), this protein is Large ribosomal subunit protein bL19.